We begin with the raw amino-acid sequence, 401 residues long: Beta-ketoadipyl-CoA thiolase (401 aa).

The active-site Acyl-thioester intermediate is cysteine 90. Catalysis depends on proton acceptor residues histidine 357 and cysteine 387.

This sequence belongs to the thiolase-like superfamily. Thiolase family.

The catalysed reaction is succinyl-CoA + acetyl-CoA = 3-oxoadipyl-CoA + CoA. Its pathway is aromatic compound metabolism; phenylacetate degradation. Functionally, catalyzes thiolytic cleavage of beta-ketoadipyl-CoA to succinyl-CoA and acetyl-CoA. The sequence is that of Beta-ketoadipyl-CoA thiolase (paaJ) from Escherichia coli.